A 402-amino-acid polypeptide reads, in one-letter code: E3 ubiquitin-protein ligase makorin-2 (402 aa).

3 consecutive C3H1-type zinc fingers follow at residues 2–29, 31–58, and 141–168; these read TTKQ…HDPS, SKPS…HVKL, and QDLP…HGDK. Residues 169–198 are makorin-type Cys-His; sequence CEVCGLQVLDPHNPEQRSMHEKMCLLAFEA. The segment at 214–268 adopts an RING-type zinc-finger fold; sequence CSICMEVVVQKMNPSDRRFGILSSCCHVFCLACIRKWRCTRNFSNKIIKSCPECR. Residues 297-326 form a C3H1-type 4 zinc finger; that stretch reads GVGKKPCKYFDQGRGSCPFGGKCLYLHALP.

It localises to the cytoplasm. The protein resides in the nucleus. The catalysed reaction is S-ubiquitinyl-[E2 ubiquitin-conjugating enzyme]-L-cysteine + [acceptor protein]-L-lysine = [E2 ubiquitin-conjugating enzyme]-L-cysteine + N(6)-ubiquitinyl-[acceptor protein]-L-lysine.. It functions in the pathway protein modification; protein ubiquitination. Its function is as follows. E3 ubiquitin ligase catalyzing the covalent attachment of ubiquitin moieties onto substrate proteins. Inhibits neurogenesis and axis formation during embryonic development by modulating the phosphatidylinositol 3-kinase (PI3K) pathway. Acts downstream of PI3K and akt1 to up-regulate gsk3b mRNA expression. In Takifugu rubripes (Japanese pufferfish), this protein is E3 ubiquitin-protein ligase makorin-2.